Here is a 269-residue protein sequence, read N- to C-terminus: Polyamine aminopropyltransferase (269 aa).

In terms of domain architecture, PABS spans 1 to 226 (MVWFFEYYDG…ALWSFIIGGE (226 aa)). Gln-28 is an S-methyl-5'-thioadenosine binding site. Residues His-59 and Asp-83 each coordinate spermidine. S-methyl-5'-thioadenosine is bound by residues Asp-102 and 133–134 (DG). The Proton acceptor role is filled by Asp-150. Residue 150–153 (DSTD) coordinates spermidine.

This sequence belongs to the spermidine/spermine synthase family. In terms of assembly, homodimer or homotetramer.

It localises to the cytoplasm. It carries out the reaction S-adenosyl 3-(methylsulfanyl)propylamine + putrescine = S-methyl-5'-thioadenosine + spermidine + H(+). It participates in amine and polyamine biosynthesis; spermidine biosynthesis; spermidine from putrescine: step 1/1. Functionally, catalyzes the irreversible transfer of a propylamine group from the amino donor S-adenosylmethioninamine (decarboxy-AdoMet) to putrescine (1,4-diaminobutane) to yield spermidine. This is Polyamine aminopropyltransferase from Archaeoglobus fulgidus (strain ATCC 49558 / DSM 4304 / JCM 9628 / NBRC 100126 / VC-16).